The following is a 1840-amino-acid chain: Collagen alpha-1(V) chain (1840 aa).

A signal peptide spans methionine 1–alanine 30. A Laminin G-like domain is found at aspartate 72–cysteine 244. The interval arginine 231 to glutamate 445 is nonhelical region. 8 positions are modified to sulfotyrosine: tyrosine 234, tyrosine 236, tyrosine 240, tyrosine 262, tyrosine 263, tyrosine 336, tyrosine 338, and tyrosine 344. Disordered stretches follow at residues serine 241–glutamine 547 and glycine 561–glutamine 1576. Over residues asparagine 258 to glycine 268 the composition is skewed to acidic residues. 3 stretches are compositionally biased toward low complexity: residues aspartate 335–aspartate 352, proline 375–proline 387, and isoleucine 462–glycine 471. The segment at glycine 446 to arginine 560 is interrupted collagenous region. Pro residues predominate over residues proline 472 to threonine 487. Composition is skewed to low complexity over residues leucine 508–proline 525 and glycine 561–proline 572. A triple-helical region region spans residues glycine 561–glycine 1572. 3 positions are modified to 4-hydroxyproline: proline 572, proline 578, and proline 623. The residue at position 629 (lysine 629) is a 5-hydroxylysine. 4-hydroxyproline is present on proline 641. Position 644 is a 5-hydroxylysine (lysine 644). 4-hydroxyproline occurs at positions 650, 656, 659, 677, and 680. A compositionally biased stretch (low complexity) spans proline 673 to proline 688. 3-hydroxyproline occurs at positions 682 and 688. Pro residues predominate over residues lysine 689 to proline 698. Proline 692, proline 698, and proline 707 each carry 4-hydroxyproline. Lysine 710 bears the 5-hydroxylysine mark. A 4-hydroxyproline mark is found at proline 719, proline 722, proline 728, and proline 734. The span at glutamine 724–proline 743 shows a compositional bias: low complexity. A 5-hydroxylysine modification is found at lysine 746. The span at leucine 749–proline 758 shows a compositional bias: low complexity. A 4-hydroxyproline mark is found at proline 752, proline 758, proline 764, proline 767, and proline 773. Lysine 776 bears the 5-hydroxylysine mark. Proline 782 and proline 791 each carry 4-hydroxyproline. Lysine 797, lysine 806, lysine 809, and lysine 812 each carry 5-hydroxylysine. Proline 818 carries the post-translational modification 4-hydroxyproline. Lysine 821 bears the 5-hydroxylysine mark. Residue proline 836 is modified to 4-hydroxyproline. Basic and acidic residues predominate over residues arginine 839–lysine 848. Residues lysine 848 and lysine 866 each carry the 5-hydroxylysine modification. A 4-hydroxyproline mark is found at proline 872, proline 875, and proline 878. A 5-hydroxylysine modification is found at lysine 884. Residues proline 890 and proline 893 each carry the 4-hydroxyproline modification. 5-hydroxylysine is present on lysine 899. 4-hydroxyproline is present on residues proline 905 and proline 908. Residues proline 910 to proline 919 are compositionally biased toward low complexity. Residues proline 932 and proline 947 each carry the 4-hydroxyproline modification. 2 stretches are compositionally biased toward low complexity: residues lysine 973 to threonine 992 and valine 1001 to methionine 1013. 4-hydroxyproline occurs at positions 1019, 1022, 1025, and 1031. Low complexity predominate over residues serine 1090–proline 1106. Residues arginine 1108–proline 1117 show a composition bias toward pro residues. 2 positions are modified to 4-hydroxyproline: proline 1223 and proline 1226. A compositionally biased stretch (low complexity) spans proline 1261 to proline 1270. The segment covering glycine 1296–glycine 1305 has biased composition (gly residues). Pro residues-rich tracts occupy residues threonine 1382 to alanine 1400 and serine 1456 to leucine 1471. Proline 1469 and proline 1472 each carry 4-hydroxyproline. Residues proline 1487–proline 1496 are compositionally biased toward low complexity. A compositionally biased stretch (pro residues) spans proline 1528–proline 1543. Positions lysine 1544–lysine 1556 are enriched in low complexity. A nonhelical region region spans residues glutamate 1573 to alanine 1607. 2 positions are modified to sulfotyrosine: tyrosine 1603 and tyrosine 1606. One can recognise a Fibrillar collagen NC1 domain in the interval glutamate 1611 to leucine 1839.

It belongs to the fibrillar collagen family. As to quaternary structure, trimers of two alpha 1(V) and one alpha 2(V) chains in most tissues and trimers of one alpha 1(V), one alpha 2(V), and one alpha 3(V) chains in placenta. Interacts with CSPG4. Post-translationally, prolines at the third position of the tripeptide repeating unit (G-X-Y) are hydroxylated in some or all of the chains. In terms of processing, sulfated on 40% of tyrosines. Hydroxylation on proline residues within the sequence motif, GXPG, is most likely to be 4-hydroxy as this fits the requirement for 4-hydroxylation in vertebrates. A high molecular weight form was detected in Schwann cells and peripheral nerve. A lower, probably processed form, is detected in all other tissues tested (at protein level).

It is found in the secreted. The protein localises to the extracellular space. The protein resides in the extracellular matrix. In terms of biological role, type V collagen is a member of group I collagen (fibrillar forming collagen). It is a minor connective tissue component of nearly ubiquitous distribution. Type V collagen binds to DNA, heparan sulfate, thrombospondin, heparin, and insulin. In Rattus norvegicus (Rat), this protein is Collagen alpha-1(V) chain (Col5a1).